The primary structure comprises 451 residues: Plasmepsin III (451 aa).

Over M1 to L37 the chain is Cytoplasmic. Residues M1–G123 constitute a propeptide that is removed on maturation. A helical; Signal-anchor for type II membrane protein membrane pass occupies residues F38–F58. The Lumenal segment spans residues E59–L451. One can recognise a Peptidase A1 domain in the interval S139–A446. Disulfide bonds link C170–C175 and C372–C408.

The protein belongs to the peptidase A1 family. As to quaternary structure, probable homodimer; in the zymogen form. Monomer; in the active form. Acidification disrupts homodimerization. Component of the hemozoin formation complex (HFC) composed of falcipains FP2A and/or FP2B, plasmepsins PMII, PMIII/HAP and PMIV, heme detoxifying protein HDP and falcilysin FLN. The HFC complex is involved in hemoglobin degradation and detoxification of heme in the food vacuole during the asexual blood stage. In terms of processing, proteolytically cleaved into the soluble active mature form by cysteine proteases in the digestive vacuole of trophozoites. Proteolysis requires an acidic environment. Transprocessing may serve as an alternate activation system.

Its subcellular location is the membrane. It localises to the vacuole lumen. The enzyme catalyses Hydrolysis of the bonds linking certain hydrophobic residues in hemoglobin or globin. Also cleaves small molecules substrates such as Ala-Leu-Glu-Arg-Thr-Phe-|-Phe(NO2)-Ser-Phe-Pro-Thr.. With respect to regulation, dimerization causes loss of catalytic activity. Inhibited by pepstatin A. Inhibited by Zn(2+). Functionally, during the asexual blood stage, catalyzes the cleavage of denatured host hemoglobin (Hb) or globins. Digestion of host Hb is an essential step which provides the parasite with amino acids for protein synthesis, and regulates osmolarity. In Plasmodium falciparum (isolate 3D7), this protein is Plasmepsin III.